The chain runs to 93 residues: Small ribosomal subunit protein uS19 (93 aa).

It belongs to the universal ribosomal protein uS19 family.

Protein S19 forms a complex with S13 that binds strongly to the 16S ribosomal RNA. This Nitratidesulfovibrio vulgaris (strain DSM 19637 / Miyazaki F) (Desulfovibrio vulgaris) protein is Small ribosomal subunit protein uS19.